The primary structure comprises 287 residues: HTH-type transcriptional regulator MurR (287 aa).

Residues Met-1–Ser-77 enclose the HTH rpiR-type domain. Residues Ser-37–Gln-56 constitute a DNA-binding region (H-T-H motif). Residues Val-128 to Val-268 enclose the SIS domain.

Homotetramer.

Its pathway is amino-sugar metabolism; N-acetylmuramate degradation [regulation]. Functionally, represses the expression of the murPQ operon involved in the uptake and degradation of N-acetylmuramic acid (MurNAc). Binds to two adjacent inverted repeats within the operator region. MurNAc 6-phosphate, the substrate of MurQ, is the specific inducer that weakens binding of MurR to the operator. This is HTH-type transcriptional regulator MurR from Salmonella arizonae (strain ATCC BAA-731 / CDC346-86 / RSK2980).